Reading from the N-terminus, the 170-residue chain is Adenine phosphoribosyltransferase (170 aa).

It belongs to the purine/pyrimidine phosphoribosyltransferase family. As to quaternary structure, homodimer.

It localises to the cytoplasm. The enzyme catalyses AMP + diphosphate = 5-phospho-alpha-D-ribose 1-diphosphate + adenine. It participates in purine metabolism; AMP biosynthesis via salvage pathway; AMP from adenine: step 1/1. Its function is as follows. Catalyzes a salvage reaction resulting in the formation of AMP, that is energically less costly than de novo synthesis. In Brevibacillus brevis (strain 47 / JCM 6285 / NBRC 100599), this protein is Adenine phosphoribosyltransferase.